The primary structure comprises 417 residues: Odorant receptor 65a (417 aa).

Topologically, residues 1-62 (MTELRSERKN…MNSEQRRLPR (62 aa)) are cytoplasmic. A helical membrane pass occupies residues 63–83 (IVAWQYFVSIQLATALASLFY). Residues 84–98 (GISESIGDIVNLGRD) lie on the Extracellular side of the membrane. A helical membrane pass occupies residues 99 to 119 (LVFIITIIFICFRLVFFAQYA). The Cytoplasmic portion of the chain corresponds to 120 to 152 (GELDVIIDALEDIYHWSIKGPATKEVQETKRLH). Residues 153 to 173 (FLLFMALIITWFSFLILFMLI) traverse the membrane as a helical segment. The Extracellular portion of the chain corresponds to 174-206 (KISTPFWIESQTLPFHVSWPFQLHDPSKHPIAY). The helical transmembrane segment at 207–227 (IIIFVSQSTTMLYFLIWLGVV) threads the bilayer. Over 228 to 290 (ENMGVSLFFE…TDRCNHIFNG (63 aa)) the chain is Cytoplasmic. Residues 291-311 (AFIMQMLINFLLVSLSLFEVL) traverse the membrane as a helical segment. Over 312–316 (AAKKN) the chain is Extracellular. Residues 317–337 (PQVAVEYMIIMLMTLGHLSFW) traverse the membrane as a helical segment. Topologically, residues 338-393 (SKFGDMFSKESEQVALAVYEAYDPNVGSKSIHRQFCFFIQRAQKPLIMKASPFPPF) are cytoplasmic. The chain crosses the membrane as a helical span at residues 394 to 414 (NLENYMFILKQCYSILTILAN). Over 415–417 (TLE) the chain is Extracellular.

It belongs to the insect chemoreceptor superfamily. Heteromeric odorant receptor channel (TC 1.A.69) family. Or49a subfamily. In terms of assembly, interacts with Orco. Complexes exist early in the endomembrane system in olfactory sensory neurons (OSNs), coupling these complexes to the conserved ciliary trafficking pathway. In terms of tissue distribution, expressed in olfactory sensory neurons in the antenna.

The protein localises to the cell membrane. Odorant receptor which mediates acceptance or avoidance behavior, depending on its substrates. The odorant receptor repertoire encodes a large collection of odor stimuli that vary widely in identity, intensity, and duration. May form a complex with Orco to form odorant-sensing units, providing sensitive and prolonged odorant signaling and calcium permeability. Involved in olfactory communication for modulating aggression through the sensing of the male-specific pheromone 11-cis-vaccenyl acetate (cVA). Although acute exposure to cVA elicites aggression through Or67d olfactory receptor neurons (ORNs), chronic cVA exposure reduces aggression through Or65a ORNs. Moreover, cVA leads to generalized learning with mated females. It is a major component of the male cuticular hydrocarbon profile, but it is not found on virgin females. During copulation, cVA is transferred to the female in ejaculate along with sperm and peptides that decrease her sexual receptivity. The sequence is that of Odorant receptor 65a (Or65a) from Drosophila melanogaster (Fruit fly).